Here is a 573-residue protein sequence, read N- to C-terminus: Potassium-transporting ATPase potassium-binding subunit (573 aa).

The next 10 helical transmembrane spans lie at 6–26 (ILFALFIVTIALITKPLGSYI), 66–86 (FFSLVSFSVMAFIFVLVILLL), 135–155 (ALAVQNFVSAAVGLCVAIALI), 177–197 (IFWILLPISIVIAIVYIFQGV), 257–277 (IQMVSIFAIAAALTYTFGKWV), 283–303 (GWLIFGVMLVLFIISLVVMTI), 382–402 (IFGGVGAGFYGFFMFLMLAVF), 428–448 (MFALLISPCCVLVFTGLAAVI), 493–513 (ITIALSMLIGRFGVIFAVIML), and 537–557 (FIFAILVFFTILLIGGLTIFP).

The protein belongs to the KdpA family. As to quaternary structure, the system is composed of three essential subunits: KdpA, KdpB and KdpC.

The protein localises to the cell inner membrane. Part of the high-affinity ATP-driven potassium transport (or Kdp) system, which catalyzes the hydrolysis of ATP coupled with the electrogenic transport of potassium into the cytoplasm. This subunit binds the periplasmic potassium ions and delivers the ions to the membrane domain of KdpB through an intramembrane tunnel. The protein is Potassium-transporting ATPase potassium-binding subunit of Francisella tularensis subsp. novicida (strain U112).